A 466-amino-acid chain; its full sequence is CBL-interacting protein kinase 20 (466 aa).

Residues 12–276 (YELGRSLGHG…IDELVKHPWF (265 aa)) enclose the Protein kinase domain. ATP contacts are provided by residues 18–26 (LGHGTFSKV) and lysine 41. The active-site Proton acceptor is the aspartate 139. An activation loop region spans residues 162–191 (DFGLSALSASRRHDGLLHTTCGTPSYVAPE). Residues 297–329 (KPANAAMNMKPASLNAFDIISLSQGFDLSGMFC) enclose the NAF domain. Positions 337–366 (TQDQLFVTGKPATAIVSRLEEIAETEHFTV) are PPI. Residues 446–466 (ASEKNQLPAVSEVSPLSSPRN) are disordered.

It belongs to the protein kinase superfamily. CAMK Ser/Thr protein kinase family. SNF1 subfamily. The cofactor is Mn(2+).

It carries out the reaction L-seryl-[protein] + ATP = O-phospho-L-seryl-[protein] + ADP + H(+). The enzyme catalyses L-threonyl-[protein] + ATP = O-phospho-L-threonyl-[protein] + ADP + H(+). Functionally, CIPK serine-threonine protein kinases interact with CBL proteins. Binding of a CBL protein to the regulatory NAF domain of CIPK protein lead to the activation of the kinase in a calcium-dependent manner. The chain is CBL-interacting protein kinase 20 (CIPK20) from Oryza sativa subsp. japonica (Rice).